A 310-amino-acid polypeptide reads, in one-letter code: tRNA dimethylallyltransferase (310 aa).

19-26 (GPTGTGKS) serves as a coordination point for ATP. Residue 21 to 26 (TGTGKS) coordinates substrate.

This sequence belongs to the IPP transferase family. In terms of assembly, monomer. Requires Mg(2+) as cofactor.

The catalysed reaction is adenosine(37) in tRNA + dimethylallyl diphosphate = N(6)-dimethylallyladenosine(37) in tRNA + diphosphate. Catalyzes the transfer of a dimethylallyl group onto the adenine at position 37 in tRNAs that read codons beginning with uridine, leading to the formation of N6-(dimethylallyl)adenosine (i(6)A). In Saccharopolyspora erythraea (strain ATCC 11635 / DSM 40517 / JCM 4748 / NBRC 13426 / NCIMB 8594 / NRRL 2338), this protein is tRNA dimethylallyltransferase.